A 175-amino-acid polypeptide reads, in one-letter code: Large ribosomal subunit protein uL10 (175 aa).

Belongs to the universal ribosomal protein uL10 family. Part of the ribosomal stalk of the 50S ribosomal subunit. The N-terminus interacts with L11 and the large rRNA to form the base of the stalk. The C-terminus forms an elongated spine to which L12 dimers bind in a sequential fashion forming a multimeric L10(L12)X complex.

Its function is as follows. Forms part of the ribosomal stalk, playing a central role in the interaction of the ribosome with GTP-bound translation factors. The sequence is that of Large ribosomal subunit protein uL10 from Prochlorococcus marinus (strain SARG / CCMP1375 / SS120).